A 254-amino-acid chain; its full sequence is Alcohol dehydrogenase (254 aa).

Position 10–33 (10–33 (FVAGLGGIGLDTSREIVKSGPKNL)) interacts with NAD(+). Residue serine 138 participates in substrate binding. Catalysis depends on tyrosine 151, which acts as the Proton acceptor.

This sequence belongs to the short-chain dehydrogenases/reductases (SDR) family. Homodimer.

It carries out the reaction a primary alcohol + NAD(+) = an aldehyde + NADH + H(+). The catalysed reaction is a secondary alcohol + NAD(+) = a ketone + NADH + H(+). The polypeptide is Alcohol dehydrogenase (Adh) (Drosophila affinidisjuncta (Fruit fly)).